A 598-amino-acid chain; its full sequence is Elongation factor 4 (598 aa).

The tr-type G domain maps to 2–184; the sequence is DNVRNFAIIA…AIITKLPAPQ (183 aa). Residues 14–19 and 131–134 each bind GTP; these read DHGKST and NKVD.

Belongs to the TRAFAC class translation factor GTPase superfamily. Classic translation factor GTPase family. LepA subfamily.

The protein resides in the cell membrane. The catalysed reaction is GTP + H2O = GDP + phosphate + H(+). Its function is as follows. Required for accurate and efficient protein synthesis under certain stress conditions. May act as a fidelity factor of the translation reaction, by catalyzing a one-codon backward translocation of tRNAs on improperly translocated ribosomes. Back-translocation proceeds from a post-translocation (POST) complex to a pre-translocation (PRE) complex, thus giving elongation factor G a second chance to translocate the tRNAs correctly. Binds to ribosomes in a GTP-dependent manner. This Wolbachia sp. subsp. Brugia malayi (strain TRS) protein is Elongation factor 4.